Here is a 389-residue protein sequence, read N- to C-terminus: 23S rRNA (uracil(747)-C(5))-methyltransferase RlmC (389 aa).

[4Fe-4S] cluster-binding residues include Cys12, Cys20, Cys23, and Cys99. Residues Gln224, Phe253, Glu274, and Asn321 each coordinate S-adenosyl-L-methionine. Catalysis depends on Cys348, which acts as the Nucleophile.

It belongs to the class I-like SAM-binding methyltransferase superfamily. RNA M5U methyltransferase family. RlmC subfamily.

The enzyme catalyses uridine(747) in 23S rRNA + S-adenosyl-L-methionine = 5-methyluridine(747) in 23S rRNA + S-adenosyl-L-homocysteine + H(+). Its function is as follows. Catalyzes the formation of 5-methyl-uridine at position 747 (m5U747) in 23S rRNA. The protein is 23S rRNA (uracil(747)-C(5))-methyltransferase RlmC of Shewanella putrefaciens (strain CN-32 / ATCC BAA-453).